The primary structure comprises 120 residues: Large ribosomal subunit protein bL19 (120 aa).

This sequence belongs to the bacterial ribosomal protein bL19 family.

This protein is located at the 30S-50S ribosomal subunit interface and may play a role in the structure and function of the aminoacyl-tRNA binding site. This Thermosynechococcus vestitus (strain NIES-2133 / IAM M-273 / BP-1) protein is Large ribosomal subunit protein bL19.